Reading from the N-terminus, the 245-residue chain is Biosynthetic peptidoglycan transglycosylase (245 aa).

Residues 19 to 41 form a helical membrane-spanning segment; the sequence is CLRWVLAAPLLFAAASVLQVLFL.

The protein belongs to the glycosyltransferase 51 family.

It localises to the cell inner membrane. The enzyme catalyses [GlcNAc-(1-&gt;4)-Mur2Ac(oyl-L-Ala-gamma-D-Glu-L-Lys-D-Ala-D-Ala)](n)-di-trans,octa-cis-undecaprenyl diphosphate + beta-D-GlcNAc-(1-&gt;4)-Mur2Ac(oyl-L-Ala-gamma-D-Glu-L-Lys-D-Ala-D-Ala)-di-trans,octa-cis-undecaprenyl diphosphate = [GlcNAc-(1-&gt;4)-Mur2Ac(oyl-L-Ala-gamma-D-Glu-L-Lys-D-Ala-D-Ala)](n+1)-di-trans,octa-cis-undecaprenyl diphosphate + di-trans,octa-cis-undecaprenyl diphosphate + H(+). It participates in cell wall biogenesis; peptidoglycan biosynthesis. Peptidoglycan polymerase that catalyzes glycan chain elongation from lipid-linked precursors. The protein is Biosynthetic peptidoglycan transglycosylase of Xanthomonas oryzae pv. oryzae (strain KACC10331 / KXO85).